The sequence spans 629 residues: Transmembrane 9 superfamily protein C1105.08 (629 aa).

Residues 1 to 26 (MLLPSIPSCSFSFVVFVSVLLQTCFS) form the signal peptide. The Lumenal segment spans residues 27-266 (FQLTPLSPKN…MHIESRQIRW (240 aa)). An N-linked (GlcNAc...) asparagine glycan is attached at Asn157. Residues 267–287 (IFIIHSAIIDTFLIFVVSIIL) form a helical membrane-spanning segment. Residues 288–337 (YRTLNRDINKYNSAFVDQEDVQEDFGWKLVHGDVFRPPRRPMLFSILLGT) lie on the Cytoplasmic side of the membrane. The helical transmembrane segment at 338–358 (GAQLLFMSSGIVLFAIFGIVA) threads the bilayer. Residues 359–364 (PSRRGS) are Lumenal-facing. A helical membrane pass occupies residues 365–385 (LATATVALFIISGFVSGYVSA). At 386–401 (LSYKLMQGMLRKRNLL) the chain is on the cytoplasmic side. Residues 402–422 (LTPFVVPGFMLAAALFFNMVF) traverse the membrane as a helical segment. The Lumenal portion of the chain corresponds to 423 to 436 (WSKSSSSTVPFSSW). The chain crosses the membrane as a helical span at residues 437–457 (LLLIFLYLLFTVPLSFVGSLI). Residues 458-488 (GFRSREFVPPVRTNQIPRQIPSHSIWLSSFP) lie on the Cytoplasmic side of the membrane. Residues 489–509 (SAIIGGSIPFLVILIELFSIL) form a helical membrane-spanning segment. Residues 510–519 (DSLWFHPLYF) lie on the Lumenal side of the membrane. Residues 520 to 544 (MFGFSFFCFGILVTTCIMVSIITVY) traverse the membrane as a helical segment. At 545–558 (FQLCSENYNWWWRS) the chain is on the cytoplasmic side. Residues 559-579 (FITPGFCGIYVFIFSVFYWFF) form a helical membrane-spanning segment. The Lumenal portion of the chain corresponds to 580–598 (KISSSSLATAVLYFGYSLL). Residues 599–619 (ISVLVFFLCGSVGFFGAFLFV) form a helical membrane-spanning segment. At 620–629 (NKIYASIKID) the chain is on the cytoplasmic side.

The protein belongs to the nonaspanin (TM9SF) (TC 9.A.2) family.

The protein resides in the golgi apparatus membrane. The protein localises to the vacuole membrane. In Schizosaccharomyces pombe (strain 972 / ATCC 24843) (Fission yeast), this protein is Transmembrane 9 superfamily protein C1105.08.